Here is a 388-residue protein sequence, read N- to C-terminus: Oligogalacturonate lyase (388 aa).

Its subcellular location is the periplasm. It carries out the reaction 4-(4-deoxy-alpha-D-galact-4-enuronosyl)-D-galacturonate = 2 5-dehydro-4-deoxy-D-glucuronate. It participates in glycan metabolism; pectin degradation; 2-dehydro-3-deoxy-D-gluconate from pectin: step 3/5. Involved in degradation of pectin, which causes soft-rod disease in plants. The protein is Oligogalacturonate lyase (ogl) of Dickeya dadantii (strain 3937) (Erwinia chrysanthemi (strain 3937)).